A 245-amino-acid chain; its full sequence is Orotidine 5'-phosphate decarboxylase (245 aa).

Residues Asp-22, Lys-44, 71–80, Thr-131, Arg-192, Gln-201, Gly-221, and Arg-222 contribute to the substrate site; that span reads DLKFHDIPNT. Residue Lys-73 is the Proton donor of the active site.

The protein belongs to the OMP decarboxylase family. Type 1 subfamily. Homodimer.

It carries out the reaction orotidine 5'-phosphate + H(+) = UMP + CO2. It participates in pyrimidine metabolism; UMP biosynthesis via de novo pathway; UMP from orotate: step 2/2. Its function is as follows. Catalyzes the decarboxylation of orotidine 5'-monophosphate (OMP) to uridine 5'-monophosphate (UMP). The protein is Orotidine 5'-phosphate decarboxylase of Yersinia pseudotuberculosis serotype O:1b (strain IP 31758).